The primary structure comprises 65 residues: Sec-independent protein translocase protein TatA (65 aa).

A helical transmembrane segment spans residues 9-29; sequence ILIIVLLVVVVFGIGKLPQVG. The tract at residues 43-65 is disordered; it reads SSGEEEKEEVETKEETKTIEKSE. A compositionally biased stretch (acidic residues) spans 45–54; it reads GEEEKEEVET. Residues 55-65 show a composition bias toward basic and acidic residues; it reads KEETKTIEKSE.

The protein belongs to the TatA/E family. As to quaternary structure, forms a complex with TatC.

Its subcellular location is the cell membrane. Functionally, part of the twin-arginine translocation (Tat) system that transports large folded proteins containing a characteristic twin-arginine motif in their signal peptide across membranes. TatA could form the protein-conducting channel of the Tat system. The protein is Sec-independent protein translocase protein TatA of Dehalococcoides mccartyi (strain ATCC BAA-2266 / KCTC 15142 / 195) (Dehalococcoides ethenogenes (strain 195)).